Here is a 123-residue protein sequence, read N- to C-terminus: SGSCTTKTCWTTLPKFRELGYVLKDKYNEAVQVEPVRASRNKRPTFLKIKKPLSYLKPMDTDLVYIEKSPNYCEEDPVTGSVGTQGRMCNKTAQHSSGCDLMCCGRGYNTHQYSRVWKCNCKF.

S1 carries the O-palmitoleoyl serine; by PORCN lipid modification. A disordered linker region spans residues 33-61 (VEPVRASRNKRPTFLKIKKPLSYLKPMDT). A disulfide bridge connects residues C89 and C104. N-linked (GlcNAc...) asparagine glycosylation is present at N90.

This sequence belongs to the Wnt family. Post-translationally, palmitoleoylation is required for efficient binding to frizzled receptors. Depalmitoleoylation leads to Wnt signaling pathway inhibition.

The protein localises to the secreted. Its subcellular location is the extracellular space. It is found in the extracellular matrix. Ligand for members of the frizzled family of seven transmembrane receptors that functions in the canonical Wnt/beta-catenin signaling pathway. Plays an important role in embryonic development, including dorsal versus ventral patterning during limb development, skeleton development and urogenital tract development. Required for central nervous system (CNS) angiogenesis and blood-brain barrier regulation. This Plethodon jordani (Red-cheeked salamander) protein is Protein Wnt-7a (WNT-7A).